Reading from the N-terminus, the 627-residue chain is Threonine--tRNA ligase (627 aa).

Positions 1 to 147 are editing domain; that stretch reads MRMLLIHSDY…TIVPSGEAKA (147 aa). The interval 208–507 is catalytic; that stretch reads PHVRIMLEQE…QSKGIKPMFP (300 aa). Zn(2+) contacts are provided by C300, H352, and H476.

It belongs to the class-II aminoacyl-tRNA synthetase family. Homodimer. Zn(2+) serves as cofactor.

It is found in the cytoplasm. The catalysed reaction is tRNA(Thr) + L-threonine + ATP = L-threonyl-tRNA(Thr) + AMP + diphosphate + H(+). Functionally, catalyzes the attachment of threonine to tRNA(Thr) in a two-step reaction: L-threonine is first activated by ATP to form Thr-AMP and then transferred to the acceptor end of tRNA(Thr). Also edits incorrectly charged L-seryl-tRNA(Thr). This is Threonine--tRNA ligase from Thermococcus onnurineus (strain NA1).